Consider the following 254-residue polypeptide: Claudin-16 (254 aa).

Residues 1 to 22 (MGPGLAASHVSFPDSLLAKMRD) lie on the Cytoplasmic side of the membrane. Residues 23 to 43 (LLQYVACFFAFFSAGFLVVAT) form a helical membrane-spanning segment. Residues 44–98 (WTDCWMVNADDSLEVSTKCRGLWWECVTNAFDGIRTCDEYDSILAEHSLKLVVTR) lie on the Extracellular side of the membrane. The helical transmembrane segment at 99 to 119 (ALMITADILAGFGFITLLLGL) threads the bilayer. Residues 120–134 (DCVKFLPDEPYIKVR) are Cytoplasmic-facing. A helical membrane pass occupies residues 135 to 155 (ISFVAGTTLLIAGAPGIIGSV). Residues 156 to 188 (WYAVDVYVERSSLVLHNIFLGIQYKFGWSCWLG) are Extracellular-facing. A helical membrane pass occupies residues 189 to 209 (MAGSLGCFLAGAILTCCLYLF). Residues 210–254 (KDVGPERSYPYSTRKAYSTTAVSMPRSHAIPRTQTAKMYAVDTRV) lie on the Cytoplasmic side of the membrane. An Interaction with TJP1 motif is present at residues 252–254 (TRV).

It belongs to the claudin family. Can form heteropolymeric tight junction strands with other claudins. Interacts with CLDN19. Interacts (via PDZ-binding motif TRV) with TJP1 (via PDZ domain). Cannot form tight junction strands on its own. As to expression, expressed preferentially in kidney.

The protein localises to the cell junction. The protein resides in the tight junction. Its subcellular location is the cell membrane. It carries out the reaction Mg(2+)(in) = Mg(2+)(out). It catalyses the reaction Ca(2+)(in) = Ca(2+)(out). The enzyme catalyses Na(+)(in) = Na(+)(out). The catalysed reaction is K(+)(in) = K(+)(out). It carries out the reaction Rb(+)(in) = Rb(+)(out). It catalyses the reaction Cs(+)(in) = Cs(+)(out). The enzyme catalyses Li(+)(in) = Li(+)(out). Forms paracellular channels: coassembles with CLDN19 into tight junction strands with cation-selective channels through the strands, conveying epithelial permeability in a process known as paracellular tight junction permeability. Involved in the maintenance of ion gradients along the nephron. In the thick ascending limb (TAL) of Henle's loop, facilitates sodium paracellular permeability from the interstitial compartment to the lumen, contributing to the lumen-positive transepithelial potential that drives paracellular magnesium and calcium reabsorption. The polypeptide is Claudin-16 (CLDN16) (Bos taurus (Bovine)).